The chain runs to 207 residues: Holliday junction branch migration complex subunit RuvA (207 aa).

Residues 1 to 68 are domain I; the sequence is MIGYLQGSLA…EDQWLLFGFL (68 aa). The interval 69–147 is domain II; the sequence is QMAERDLFRQ…EWREEAGLLP (79 aa). Positions 148 to 158 are flexible linker; the sequence is SATAAPIAAVQ. Residues 158-207 are domain III; the sequence is QEDVEMTLLALGYNNREILQALTAIAQENLVQSGQPAEDWIREAIAWLSR.

This sequence belongs to the RuvA family. Homotetramer. Forms an RuvA(8)-RuvB(12)-Holliday junction (HJ) complex. HJ DNA is sandwiched between 2 RuvA tetramers; dsDNA enters through RuvA and exits via RuvB. An RuvB hexamer assembles on each DNA strand where it exits the tetramer. Each RuvB hexamer is contacted by two RuvA subunits (via domain III) on 2 adjacent RuvB subunits; this complex drives branch migration. In the full resolvosome a probable DNA-RuvA(4)-RuvB(12)-RuvC(2) complex forms which resolves the HJ.

The protein resides in the cytoplasm. In terms of biological role, the RuvA-RuvB-RuvC complex processes Holliday junction (HJ) DNA during genetic recombination and DNA repair, while the RuvA-RuvB complex plays an important role in the rescue of blocked DNA replication forks via replication fork reversal (RFR). RuvA specifically binds to HJ cruciform DNA, conferring on it an open structure. The RuvB hexamer acts as an ATP-dependent pump, pulling dsDNA into and through the RuvAB complex. HJ branch migration allows RuvC to scan DNA until it finds its consensus sequence, where it cleaves and resolves the cruciform DNA. The chain is Holliday junction branch migration complex subunit RuvA from Synechococcus elongatus (strain ATCC 33912 / PCC 7942 / FACHB-805) (Anacystis nidulans R2).